The sequence spans 530 residues: Probable histone-arginine methyltransferase CARMER (530 aa).

In terms of domain architecture, SAM-dependent MTase PRMT-type spans 141-450 (ASQYFQFYGY…QSYDVTIDLH (310 aa)). 6 residues coordinate S-adenosyl-L-methionine: Gln154, Arg163, Gly187, Glu209, Glu238, and Thr266. Arg501 carries the asymmetric dimethylarginine; by autocatalysis modification.

This sequence belongs to the class I-like SAM-binding methyltransferase superfamily. Protein arginine N-methyltransferase family. In terms of assembly, homodimer. Interacts with EcR. Post-translationally, the dimethylated protein is the major form. Present ubiquitously (at protein level). Expressed in the imaginal disks and in larval brains, and to a much lesser degree in the polytene larval tissue such as salivary glands.

Its subcellular location is the cytoplasm. It is found in the nucleus. It carries out the reaction L-arginyl-[protein] + 2 S-adenosyl-L-methionine = N(omega),N(omega)-dimethyl-L-arginyl-[protein] + 2 S-adenosyl-L-homocysteine + 2 H(+). Functionally, methylates (mono- and asymmetric dimethylation) the guanidino nitrogens of arginyl residues in proteins. May methylate histone H3 at 'Arg-17' and activate transcription via chromatin remodeling. Coordinates ecdysone-mediated expression of cell death genes. The protein is Probable histone-arginine methyltransferase CARMER (Art4) of Drosophila melanogaster (Fruit fly).